The chain runs to 205 residues: Large ribosomal subunit protein bL9 (205 aa).

The tract at residues 160–205 (RDRKSRNAAAASEVQDAPVEDGGDEVVSVDSVAAEDGGADASGGTA) is disordered. The segment covering 184-195 (EVVSVDSVAAED) has biased composition (low complexity).

This sequence belongs to the bacterial ribosomal protein bL9 family.

In terms of biological role, binds to the 23S rRNA. The sequence is that of Large ribosomal subunit protein bL9 from Anaplasma phagocytophilum (strain HZ).